Here is a 425-residue protein sequence, read N- to C-terminus: Adenylosuccinate synthetase (425 aa).

GTP is bound by residues 12 to 18 (GDEGKAK) and 40 to 42 (GHT). The Proton acceptor role is filled by Asp13. Mg(2+) is bound by residues Asp13 and Gly40. IMP-binding positions include 13-16 (DEGK), 38-41 (NAGH), Thr130, Arg144, Gln224, Thr239, and Arg303. The active-site Proton donor is the His41. 299–305 (ATTGRPR) is a substrate binding site. Residues Arg305, 331 to 333 (KID), and 411 to 413 (STG) each bind GTP.

It belongs to the adenylosuccinate synthetase family. Homodimer. The cofactor is Mg(2+).

The protein resides in the cytoplasm. The enzyme catalyses IMP + L-aspartate + GTP = N(6)-(1,2-dicarboxyethyl)-AMP + GDP + phosphate + 2 H(+). Its pathway is purine metabolism; AMP biosynthesis via de novo pathway; AMP from IMP: step 1/2. In terms of biological role, plays an important role in the de novo pathway of purine nucleotide biosynthesis. Catalyzes the first committed step in the biosynthesis of AMP from IMP. The sequence is that of Adenylosuccinate synthetase from Leptospira interrogans serogroup Icterohaemorrhagiae serovar copenhageni (strain Fiocruz L1-130).